A 77-amino-acid chain; its full sequence is UPF0346 protein LMOf2365_1885 (77 aa).

Belongs to the UPF0346 family.

This chain is UPF0346 protein LMOf2365_1885, found in Listeria monocytogenes serotype 4b (strain F2365).